A 77-amino-acid chain; its full sequence is uncharacterized protein (77 aa).

This is an uncharacterized protein from Bacillus licheniformis.